We begin with the raw amino-acid sequence, 99 residues long: MFEQKISSEALTTTTSIPATGQITQRPLRDSVRQAVSGYVAQLNGQDPTELYELVLSEVEAPLLDIIMQYTRGNQTRAATMLGINRGTLRKKLKKYGMG.

The disordered stretch occupies residues 1–25 (MFEQKISSEALTTTTSIPATGQITQ). Positions 75–94 (QTRAATMLGINRGTLRKKLK) form a DNA-binding region, H-T-H motif.

It belongs to the transcriptional regulatory Fis family. Homodimer.

Activates ribosomal RNA transcription. Plays a direct role in upstream activation of rRNA promoters. The sequence is that of DNA-binding protein Fis from Psychromonas ingrahamii (strain DSM 17664 / CCUG 51855 / 37).